The chain runs to 211 residues: ATP phosphoribosyltransferase (211 aa).

The protein belongs to the ATP phosphoribosyltransferase family. Short subfamily. As to quaternary structure, heteromultimer composed of HisG and HisZ subunits.

It localises to the cytoplasm. It catalyses the reaction 1-(5-phospho-beta-D-ribosyl)-ATP + diphosphate = 5-phospho-alpha-D-ribose 1-diphosphate + ATP. Its pathway is amino-acid biosynthesis; L-histidine biosynthesis; L-histidine from 5-phospho-alpha-D-ribose 1-diphosphate: step 1/9. Catalyzes the condensation of ATP and 5-phosphoribose 1-diphosphate to form N'-(5'-phosphoribosyl)-ATP (PR-ATP). Has a crucial role in the pathway because the rate of histidine biosynthesis seems to be controlled primarily by regulation of HisG enzymatic activity. This Pseudomonas savastanoi pv. phaseolicola (strain 1448A / Race 6) (Pseudomonas syringae pv. phaseolicola (strain 1448A / Race 6)) protein is ATP phosphoribosyltransferase.